We begin with the raw amino-acid sequence, 313 residues long: Ester hydrolase C11orf54 homolog (313 aa).

Residues His-264, His-266, and His-276 each coordinate Zn(2+).

Monomer. Zn(2+) serves as cofactor.

It is found in the nucleus. It localises to the cytoplasm. Its function is as follows. Exhibits ester hydrolase activity on the substrate p-nitrophenyl acetate, in vitro. May regulate DNA damage and repair by regulating HIF1A degradation via chaperone-mediated autophagy (CMA). This chain is Ester hydrolase C11orf54 homolog, found in Xenopus tropicalis (Western clawed frog).